A 201-amino-acid polypeptide reads, in one-letter code: Outer-membrane lipoprotein LolB (201 aa).

An N-terminal signal peptide occupies residues 1–18 (MKWCRLSIILMSLILLAG). Cys19 carries N-palmitoyl cysteine lipidation. Residue Cys19 is the site of S-diacylglycerol cysteine attachment.

It belongs to the LolB family. In terms of assembly, monomer.

It is found in the cell outer membrane. Functionally, plays a critical role in the incorporation of lipoproteins in the outer membrane after they are released by the LolA protein. This chain is Outer-membrane lipoprotein LolB, found in Nitrosococcus oceani (strain ATCC 19707 / BCRC 17464 / JCM 30415 / NCIMB 11848 / C-107).